Here is a 439-residue protein sequence, read N- to C-terminus: Serine hydroxymethyltransferase (439 aa).

(6S)-5,6,7,8-tetrahydrofolate is bound by residues L134 and 138-140 (GHL). At K243 the chain carries N6-(pyridoxal phosphate)lysine.

Belongs to the SHMT family. As to quaternary structure, homodimer. Pyridoxal 5'-phosphate is required as a cofactor.

The protein resides in the cytoplasm. The catalysed reaction is (6R)-5,10-methylene-5,6,7,8-tetrahydrofolate + glycine + H2O = (6S)-5,6,7,8-tetrahydrofolate + L-serine. It participates in one-carbon metabolism; tetrahydrofolate interconversion. It functions in the pathway amino-acid biosynthesis; glycine biosynthesis; glycine from L-serine: step 1/1. In terms of biological role, catalyzes the reversible interconversion of serine and glycine with tetrahydrofolate (THF) serving as the one-carbon carrier. This reaction serves as the major source of one-carbon groups required for the biosynthesis of purines, thymidylate, methionine, and other important biomolecules. Also exhibits THF-independent aldolase activity toward beta-hydroxyamino acids, producing glycine and aldehydes, via a retro-aldol mechanism. The chain is Serine hydroxymethyltransferase from Brucella anthropi (strain ATCC 49188 / DSM 6882 / CCUG 24695 / JCM 21032 / LMG 3331 / NBRC 15819 / NCTC 12168 / Alc 37) (Ochrobactrum anthropi).